Consider the following 436-residue polypeptide: GTPase Der (436 aa).

EngA-type G domains follow at residues 4 to 167 and 176 to 351; these read PVVA…KNLP and VQFC…ENHA. Residues 10-17, 57-61, 119-122, 182-189, 229-233, and 294-297 contribute to the GTP site; these read GRPNVGKS, DTGGI, NKLD, DTAGM, and NKWD. Positions 352–436 constitute a KH-like domain; it reads MRVQTNILND…PIKIFARARK (85 aa).

This sequence belongs to the TRAFAC class TrmE-Era-EngA-EngB-Septin-like GTPase superfamily. EngA (Der) GTPase family. Associates with the 50S ribosomal subunit.

Its function is as follows. GTPase that plays an essential role in the late steps of ribosome biogenesis. In Bacillus pumilus (strain SAFR-032), this protein is GTPase Der.